Here is a 473-residue protein sequence, read N- to C-terminus: Siroheme synthase 1 (473 aa).

The precorrin-2 dehydrogenase /sirohydrochlorin ferrochelatase stretch occupies residues 1-204; sequence MDYFPIFCQL…NDHVQADQHV (204 aa). Residues 22–23 and 43–44 contribute to the NAD(+) site; these read EI and CE. At S128 the chain carries Phosphoserine. The uroporphyrinogen-III C-methyltransferase stretch occupies residues 216–473; the sequence is GEVVLVGAGP…KVTECVAHVG (258 aa). P225 provides a ligand contact to S-adenosyl-L-methionine. The active-site Proton acceptor is the D248. K270 acts as the Proton donor in catalysis. S-adenosyl-L-methionine is bound by residues 301 to 303, I306, 331 to 332, M382, and G411; these read GGD and TA.

This sequence in the N-terminal section; belongs to the precorrin-2 dehydrogenase / sirohydrochlorin ferrochelatase family. In the C-terminal section; belongs to the precorrin methyltransferase family.

It catalyses the reaction uroporphyrinogen III + 2 S-adenosyl-L-methionine = precorrin-2 + 2 S-adenosyl-L-homocysteine + H(+). It carries out the reaction precorrin-2 + NAD(+) = sirohydrochlorin + NADH + 2 H(+). The enzyme catalyses siroheme + 2 H(+) = sirohydrochlorin + Fe(2+). It functions in the pathway cofactor biosynthesis; adenosylcobalamin biosynthesis; precorrin-2 from uroporphyrinogen III: step 1/1. Its pathway is cofactor biosynthesis; adenosylcobalamin biosynthesis; sirohydrochlorin from precorrin-2: step 1/1. The protein operates within porphyrin-containing compound metabolism; siroheme biosynthesis; precorrin-2 from uroporphyrinogen III: step 1/1. It participates in porphyrin-containing compound metabolism; siroheme biosynthesis; siroheme from sirohydrochlorin: step 1/1. It functions in the pathway porphyrin-containing compound metabolism; siroheme biosynthesis; sirohydrochlorin from precorrin-2: step 1/1. Functionally, multifunctional enzyme that catalyzes the SAM-dependent methylations of uroporphyrinogen III at position C-2 and C-7 to form precorrin-2 via precorrin-1. Then it catalyzes the NAD-dependent ring dehydrogenation of precorrin-2 to yield sirohydrochlorin. Finally, it catalyzes the ferrochelation of sirohydrochlorin to yield siroheme. This is Siroheme synthase 1 from Yersinia pestis (strain Pestoides F).